We begin with the raw amino-acid sequence, 294 residues long: Keratin-like protein KRT222 (294 aa).

In terms of domain architecture, IF rod spans 1 to 150 (MELSQLLNEI…RLLEQEEIRY (150 aa)). Residues 1 to 151 (MELSQLLNEI…LLEQEEIRYY (151 aa)) are a coiled coil.

It belongs to the intermediate filament family.

The sequence is that of Keratin-like protein KRT222 (Krt222) from Mus musculus (Mouse).